A 215-amino-acid polypeptide reads, in one-letter code: Pyrrolidone-carboxylate peptidase 1 (215 aa).

Catalysis depends on residues Glu-80, Cys-143, and His-167.

It belongs to the peptidase C15 family. In terms of assembly, homotetramer.

Its subcellular location is the cytoplasm. The enzyme catalyses Release of an N-terminal pyroglutamyl group from a polypeptide, the second amino acid generally not being Pro.. Functionally, removes 5-oxoproline from various penultimate amino acid residues except L-proline. The sequence is that of Pyrrolidone-carboxylate peptidase 1 from Ralstonia nicotianae (strain ATCC BAA-1114 / GMI1000) (Ralstonia solanacearum).